The primary structure comprises 169 residues: Ribosome maturation factor RimM (169 aa).

The 74-residue stretch at 96–169 (DGEYYWADLI…RILVDWGLDY (74 aa)) folds into the PRC barrel domain.

The protein belongs to the RimM family. In terms of assembly, binds ribosomal protein uS19.

It is found in the cytoplasm. Functionally, an accessory protein needed during the final step in the assembly of 30S ribosomal subunit, possibly for assembly of the head region. Essential for efficient processing of 16S rRNA. May be needed both before and after RbfA during the maturation of 16S rRNA. It has affinity for free ribosomal 30S subunits but not for 70S ribosomes. This is Ribosome maturation factor RimM from Chromobacterium violaceum (strain ATCC 12472 / DSM 30191 / JCM 1249 / CCUG 213 / NBRC 12614 / NCIMB 9131 / NCTC 9757 / MK).